We begin with the raw amino-acid sequence, 282 residues long: Undecaprenyl-diphosphatase (282 aa).

8 helical membrane-spanning segments follow: residues 1–21 (MTLI…FLPI), 39–59 (PGAA…MLYF), 85–105 (AKMG…GLLF), 115–135 (SLYW…LAEW), 153–173 (IGWK…IPGS), 193–213 (AARF…AFEL), 229–249 (NLAV…AFLL), and 259–279 (IFIA…GGGT).

It belongs to the UppP family.

It is found in the cell inner membrane. It catalyses the reaction di-trans,octa-cis-undecaprenyl diphosphate + H2O = di-trans,octa-cis-undecaprenyl phosphate + phosphate + H(+). Its function is as follows. Catalyzes the dephosphorylation of undecaprenyl diphosphate (UPP). Confers resistance to bacitracin. This is Undecaprenyl-diphosphatase from Chlorobium luteolum (strain DSM 273 / BCRC 81028 / 2530) (Pelodictyon luteolum).